A 200-amino-acid chain; its full sequence is Histone chaperone asf1a-B (200 aa).

It belongs to the ASF1 family. In terms of assembly, interacts with histone H3 (including both histone H3.1 and H3.3) and histone H4.

It is found in the nucleus. Histone chaperone that facilitates histone deposition and histone exchange and removal during nucleosome assembly and disassembly. The polypeptide is Histone chaperone asf1a-B (asf1ab) (Xenopus laevis (African clawed frog)).